Here is a 467-residue protein sequence, read N- to C-terminus: Cilia- and flagella-associated protein 97 (467 aa).

4 disordered regions span residues 1 to 20, 76 to 235, 336 to 370, and 412 to 467; these read MDRYGNLSDDGEVDHSFFDS, IAKP…DISP, RQAAKPRSKSLTPKKPMSAPTRLYHSAINRQKEQQ, and ALSP…AAWQ. Residues 124-135 show a composition bias toward acidic residues; that stretch reads DNYYPDEEDSSE. A compositionally biased stretch (polar residues) spans 162–177; the sequence is DFVSTISSSDTEYSDT. The span at 180-194 shows a compositional bias: low complexity; sequence DDGASKSSYQSSKGS. Residues 198–216 are compositionally biased toward basic and acidic residues; that stretch reads SPERKPSRSSMRELRHYAE. Polar residues predominate over residues 223-235; the sequence is TDVTPLSTPDISP. The stretch at 310-387 forms a coiled coil; that stretch reads KKNFSFSNDE…ALLKRLESVK (78 aa). Residues 421–439 are compositionally biased toward low complexity; that stretch reads SVSRLSPSVSSGGFSRMSS.

It belongs to the CFAP97 family.

The polypeptide is Cilia- and flagella-associated protein 97 (Xenopus tropicalis (Western clawed frog)).